The primary structure comprises 102 residues: MYAIIETGGKQIKVEAGQEIYVEKLAGEVGDVITFDKVLFVGGDSAKVGVPFVEGATVTAKVEKQGRAKKLTVYKYKPKKNYHKKQGHRQPYTKLTIDAINA.

It belongs to the bacterial ribosomal protein bL21 family. In terms of assembly, part of the 50S ribosomal subunit. Contacts protein L20.

This protein binds to 23S rRNA in the presence of protein L20. This chain is Large ribosomal subunit protein bL21, found in Listeria monocytogenes serotype 4b (strain CLIP80459).